A 178-amino-acid polypeptide reads, in one-letter code: Ribose 1,5-bisphosphate phosphokinase PhnN (178 aa).

Residue G9–D16 coordinates ATP.

This sequence belongs to the ribose 1,5-bisphosphokinase family.

The enzyme catalyses alpha-D-ribose 1,5-bisphosphate + ATP = 5-phospho-alpha-D-ribose 1-diphosphate + ADP. It functions in the pathway metabolic intermediate biosynthesis; 5-phospho-alpha-D-ribose 1-diphosphate biosynthesis; 5-phospho-alpha-D-ribose 1-diphosphate from D-ribose 5-phosphate (route II): step 3/3. In terms of biological role, catalyzes the phosphorylation of ribose 1,5-bisphosphate to 5-phospho-D-ribosyl alpha-1-diphosphate (PRPP). The chain is Ribose 1,5-bisphosphate phosphokinase PhnN from Pantoea vagans (strain C9-1) (Pantoea agglomerans (strain C9-1)).